A 514-amino-acid polypeptide reads, in one-letter code: ATP synthase subunit alpha (514 aa).

170 to 177 is a binding site for ATP; it reads GDRQIGKT.

The protein belongs to the ATPase alpha/beta chains family. F-type ATPases have 2 components, CF(1) - the catalytic core - and CF(0) - the membrane proton channel. CF(1) has five subunits: alpha(3), beta(3), gamma(1), delta(1), epsilon(1). CF(0) has three main subunits: a(1), b(2) and c(9-12). The alpha and beta chains form an alternating ring which encloses part of the gamma chain. CF(1) is attached to CF(0) by a central stalk formed by the gamma and epsilon chains, while a peripheral stalk is formed by the delta and b chains.

It localises to the cell inner membrane. The catalysed reaction is ATP + H2O + 4 H(+)(in) = ADP + phosphate + 5 H(+)(out). Its function is as follows. Produces ATP from ADP in the presence of a proton gradient across the membrane. The alpha chain is a regulatory subunit. The polypeptide is ATP synthase subunit alpha (Pseudomonas putida (strain ATCC 700007 / DSM 6899 / JCM 31910 / BCRC 17059 / LMG 24140 / F1)).